We begin with the raw amino-acid sequence, 206 residues long: Ribosomal RNA small subunit methyltransferase G (206 aa).

S-adenosyl-L-methionine-binding positions include Gly-71, Phe-76, Ile-125–Glu-126, and Arg-139.

This sequence belongs to the methyltransferase superfamily. RNA methyltransferase RsmG family.

It is found in the cytoplasm. The enzyme catalyses guanosine(527) in 16S rRNA + S-adenosyl-L-methionine = N(7)-methylguanosine(527) in 16S rRNA + S-adenosyl-L-homocysteine. In terms of biological role, specifically methylates the N7 position of guanine in position 527 of 16S rRNA. This chain is Ribosomal RNA small subunit methyltransferase G, found in Cereibacter sphaeroides (strain ATCC 17029 / ATH 2.4.9) (Rhodobacter sphaeroides).